Reading from the N-terminus, the 209-residue chain is Probable phosphatase C1687.21 (209 aa).

Residue His-8 is the Tele-phosphohistidine intermediate of the active site. The Proton donor/acceptor role is filled by Glu-82.

This sequence belongs to the phosphoglycerate mutase family. BPG-dependent PGAM subfamily.

Its subcellular location is the cytoplasm. It localises to the nucleus. The sequence is that of Probable phosphatase C1687.21 from Schizosaccharomyces pombe (strain 972 / ATCC 24843) (Fission yeast).